The sequence spans 121 residues: Large ribosomal subunit protein uL22 (121 aa).

This sequence belongs to the universal ribosomal protein uL22 family. Part of the 50S ribosomal subunit.

This protein binds specifically to 23S rRNA; its binding is stimulated by other ribosomal proteins, e.g. L4, L17, and L20. It is important during the early stages of 50S assembly. It makes multiple contacts with different domains of the 23S rRNA in the assembled 50S subunit and ribosome. Its function is as follows. The globular domain of the protein is located near the polypeptide exit tunnel on the outside of the subunit, while an extended beta-hairpin is found that lines the wall of the exit tunnel in the center of the 70S ribosome. This is Large ribosomal subunit protein uL22 from Paenarthrobacter aurescens (strain TC1).